Here is a 157-residue protein sequence, read N- to C-terminus: Transcription factor HES-2 (157 aa).

In terms of domain architecture, bHLH spans Leu13–Gln70. The Orange domain occupies Tyr86 to Leu119. Residues Val124–Trp157 are disordered. Positions Thr132 to Gly149 are enriched in pro residues. A WRPW motif motif is present at residues Trp154–Trp157.

As to quaternary structure, transcription repression requires formation of a complex with a corepressor protein of the Groucho/TLE family.

The protein localises to the nucleus. In terms of biological role, transcriptional repressor of genes that require a bHLH protein for their transcription. The sequence is that of Transcription factor HES-2 (Hes2) from Mus musculus (Mouse).